The primary structure comprises 470 residues: Pyruvate kinase I (470 aa).

Position 32 (Arg32) interacts with substrate. 4 residues coordinate K(+): Asn34, Ser36, Asp66, and Thr67. 34–37 (NFSH) provides a ligand contact to ATP. ATP is bound by residues Arg73 and Lys156. Lys220 contacts substrate. Glu222 serves as a coordination point for Mg(2+). Positions 245, 246, and 278 each coordinate substrate. Asp246 is a Mg(2+) binding site.

This sequence belongs to the pyruvate kinase family. As to quaternary structure, homotetramer. It depends on Mg(2+) as a cofactor. K(+) serves as cofactor.

It carries out the reaction pyruvate + ATP = phosphoenolpyruvate + ADP + H(+). Its pathway is carbohydrate degradation; glycolysis; pyruvate from D-glyceraldehyde 3-phosphate: step 5/5. Belongs to type I PK; fructose 1,6-bisphosphate-activated. Catalyzes the formation of pyruvate in the last step of glycolysis, it is irreversible under physiological conditions. The reaction is critical for the control of metabolic flux in the second part of glycolysis. This chain is Pyruvate kinase I (pykF), found in Salmonella typhimurium (strain LT2 / SGSC1412 / ATCC 700720).